Here is a 567-residue protein sequence, read N- to C-terminus: Adenine deaminase 2 (567 aa).

The protein belongs to the metallo-dependent hydrolases superfamily. Adenine deaminase family. The cofactor is Mn(2+).

It carries out the reaction adenine + H2O + H(+) = hypoxanthine + NH4(+). The sequence is that of Adenine deaminase 2 from Oenococcus oeni (strain ATCC BAA-331 / PSU-1).